The primary structure comprises 330 residues: Negative regulator of the PHO system (330 aa).

The 283-residue stretch at 8 to 290 folds into the Protein kinase domain; sequence FQQLEKLGEG…ARQALQHPWF (283 aa). Residues 14–22 and Lys37 contribute to the ATP site; that span reads LGEGTYATV. Asp131 functions as the Proton acceptor in the catalytic mechanism. The interval 300–330 is disordered; that stretch reads MQHLADPYQQSQQQSQQQAQQSQQMDPQTYR. Over residues 308–323 the composition is skewed to low complexity; that stretch reads QQSQQQSQQQAQQSQQ.

Belongs to the protein kinase superfamily. CMGC Ser/Thr protein kinase family. CDC2/CDKX subfamily. Interacts with a number of cyclins.

It carries out the reaction L-seryl-[protein] + ATP = O-phospho-L-seryl-[protein] + ADP + H(+). The enzyme catalyses L-threonyl-[protein] + ATP = O-phospho-L-threonyl-[protein] + ADP + H(+). Functionally, when phosphate concentrations are high it phosphorylates the PHO4 transcription factor thus establishing repression. This chain is Negative regulator of the PHO system (PHO85), found in Debaryomyces hansenii (strain ATCC 36239 / CBS 767 / BCRC 21394 / JCM 1990 / NBRC 0083 / IGC 2968) (Yeast).